Here is a 509-residue protein sequence, read N- to C-terminus: Aromatase (509 aa).

Cysteine 437 lines the heme pocket.

This sequence belongs to the cytochrome P450 family. It depends on heme as a cofactor.

It is found in the membrane. The enzyme catalyses testosterone + 3 reduced [NADPH--hemoprotein reductase] + 3 O2 = 17beta-estradiol + formate + 3 oxidized [NADPH--hemoprotein reductase] + 4 H2O + 4 H(+). It carries out the reaction androst-4-ene-3,17-dione + 3 reduced [NADPH--hemoprotein reductase] + 3 O2 = estrone + formate + 3 oxidized [NADPH--hemoprotein reductase] + 4 H2O + 4 H(+). In terms of biological role, catalyzes the formation of aromatic C18 estrogens from C19 androgens. In Taeniopygia guttata (Zebra finch), this protein is Aromatase (CYP19A1).